We begin with the raw amino-acid sequence, 161 residues long: Ribosome maturation factor RimP (161 aa).

This sequence belongs to the RimP family.

It is found in the cytoplasm. In terms of biological role, required for maturation of 30S ribosomal subunits. The sequence is that of Ribosome maturation factor RimP from Rickettsia africae (strain ESF-5).